The following is a 1598-amino-acid chain: MADCPYARCIQERRHIRRELLRWTKNMVFVVGLERVAEELMGRRRWKQYQDTLYSGTRSSESLTAQAHHRLYPAFSSSCDPVPGNLEQIGSRPLHPPASSTSLPATITTTTTTTTTTTATAAATATTTATGLIKQETLQRHHHLQNHHHHLQSTAVQDHHRPYQQQQQQQQRQQQRQEERRLRPDEIKVEVGEDEFANGGAARDESKAGSTDASTPATVTTTGATTTLPAASATGTGPATPSAVVATSNATAAMTTGTTTIPTRRLRKRRQNDGEGADDRDDDEENEEEEDGRGQSEAEKRLKLDEDADGAVSPLRREKDRGSREYPTSNATDTDGTKERTEEVALDRTPVTQGLLRVKKEEELQEAPSCGGGPTILTTPGLDSDGIRLPCREVEAAATARNVVAPFLIGSRRTSPPPEDWKPLDKCYFCLDGKLPHDDQPPLSPQSDSSSSSRSAESPMSVQVDPMAASVVAAALTGTYPTLLPQWCLPPREAPLVGVQPHQDSATPADQPLDLSAKPKNSQDNNISLLEQQKIPLRMTAGIDPKSIFNSGYRPKPRMSGPVAAVAAAAVAAAGVGGVPVVGAGGGRRAYTEEELQAALRDIQSGKLGTRRAAVIYGIPRSTLRNKVYKLAMERERDASLSSTHSHPHEPGAPATTITTITTTTTTTTTTTTTTTTPNTTQNASATTPPPQVDEVDDKELSGAEEEKEVEKALLKPLLSLEDLVRFSTLEGSGGDSLRTLLQRGQETGAEWPGLEHANIGPYIQKMIAAAAPFKGMETQDYRIPEVMRRLMSEDKRLSKSVNGDQSQPPHQQLHHHQSTHPQAQAQAQPQQQQQQQQQQPQQQQQQQQQQQQQQRGPMTNDDFNPNIEEEASDSAQGRAILKIPSYKPASTPGCSSKNGEPTSAAFAQGFATAASSPGLLERASPAFSGTSSPTNSLVGKTVAVNFRDVIAKSISVKFQEGQTVSGGGMGGCQPGGVVQSQQPIMTDPSPFKRGRYTPPQPANAQQGQAQAQAKPQSQEANKPKPATGGKGTRPKRGKYRNYDRDSLVEAVRAVQRGEMSVHRAGSYYGVPHSTLEYKVKERHLMRPRKRDQKQSDDKTKETSTVTAAAAATNIRPGTADNKPQLKPQKPFTSPGGIPGPNGIKMPSFMEGMPHLPFTPFNFWNPPPFMPSPFMAGAPNVPTILPEQYFATSRIRGLQEQQRNAAMVQQQQQQQQQQQQQQQQQQQQQQQQQHQAREREGVGAGIAETSAGTSNSRGAAQMSKVPRDVSEGIYDGSGANGSFLDNLIRSSLETGIPRDQRAMTEARNQQQQASSQQQIPESMRSKALIDQLCRNSRRTPVPRLAQDSSEDESYRGPSASGGRPVPERPERVPTVDLSPSPSDRGRNDDGSDRLTSPPTPLSISRAGSRDEDSTRDSTKLDRSSREREVHNGGQQEDRDRKTLTSAPQQPQQQQQQQQQQQQQQQQLNHYPDLHNLYAVPTDKKSACDSKLIVDHSSQKTQQQQPQQQQQQQQQQQPQQQSQQPQQQQPQPQQQQQQQQQQQPQQQQKEYGAVSGLVVQLQRGYNSGNNRSGEQANSQQQQQQQSGEPVIGMEDSVEQ.

Disordered stretches follow at residues 83 to 105 (PGNL…SLPA), 140 to 387 (RHHH…SDGI), 436 to 462 (PHDD…PMSV), and 495 to 525 (PLVG…SQDN). Over residues 140–151 (RHHHLQNHHHHL) the composition is skewed to basic residues. Low complexity predominate over residues 164 to 174 (QQQQQQQQRQQ). Positions 175-191 (QRQEERRLRPDEIKVEV) are enriched in basic and acidic residues. Positions 210-263 (STDASTPATVTTTGATTTLPAASATGTGPATPSAVVATSNATAAMTTGTTTIPT) are enriched in low complexity. Residues 275–291 (EGADDRDDDEENEEEED) show a composition bias toward acidic residues. Basic and acidic residues-rich tracts occupy residues 292 to 305 (GRGQ…LKLD), 315 to 324 (LRREKDRGSR), and 335 to 346 (DGTKERTEEVAL). Serine 444 carries the post-translational modification Phosphoserine; by MAPK. The segment covering 445–461 (PQSDSSSSSRSAESPMS) has biased composition (low complexity). Residues 582–634 (VGAGGGRRAYTEEELQAALRDIQSGKLGTRRAAVIYGIPRSTLRNKVYKLAME) enclose the HTH psq-type 1 domain. A DNA-binding region (H-T-H motif) is located at residues 610–630 (TRRAAVIYGIPRSTLRNKVYK). Disordered stretches follow at residues 636–705 (ERDA…SGAE), 797–877 (RLSK…DSAQ), 962–1045 (GQTV…NYDR), 1082–1145 (ERHL…NGIK), 1248–1283 (ETSA…NGSF), and 1301–1598 (RAMT…SVEQ). Residues 653 to 687 (APATTITTITTTTTTTTTTTTTTTTPNTTQNASAT) show a composition bias toward low complexity. Residues 694–705 (DEVDDKELSGAE) are compositionally biased toward acidic residues. Low complexity predominate over residues 820–855 (THPQAQAQAQPQQQQQQQQQQPQQQQQQQQQQQQQQ). Over residues 965–975 (VSGGGMGGCQP) the composition is skewed to gly residues. Low complexity predominate over residues 1003-1021 (ANAQQGQAQAQAKPQSQEA). In terms of domain architecture, HTH psq-type 2 spans 1034–1086 (RPKRGKYRNYDRDSLVEAVRAVQRGEMSVHRAGSYYGVPHSTLEYKVKERHLM). Residues 1062–1082 (VHRAGSYYGVPHSTLEYKVKE) constitute a DNA-binding region (H-T-H motif). Over residues 1093-1102 (QKQSDDKTKE) the composition is skewed to basic and acidic residues. Low complexity predominate over residues 1103–1120 (TSTVTAAAAATNIRPGTA). The span at 1309–1318 (QQQQASSQQQ) shows a compositional bias: low complexity. Composition is skewed to basic and acidic residues over residues 1383 to 1392 (DRGRNDDGSD) and 1407 to 1442 (GSRD…DRKT). Residues 1447–1466 (PQQPQQQQQQQQQQQQQQQQ) show a composition bias toward low complexity. The span at 1481–1497 (TDKKSACDSKLIVDHSS) shows a compositional bias: basic and acidic residues. Residues 1501–1547 (QQQQPQQQQQQQQQQQPQQQSQQPQQQQPQPQQQQQQQQQQQPQQQQ) show a composition bias toward low complexity. Polar residues predominate over residues 1562 to 1577 (RGYNSGNNRSGEQANS).

As to quaternary structure, homodimer. In terms of tissue distribution, large-type Kenyon cells of mushroom body.

It localises to the nucleus. In terms of biological role, transcriptional activator which binds to the consensus sequence 5'-CCCTATCGATCGATCTCTACCT-3'. May play a role in higher-order sensory processing. The polypeptide is Mushroom body large-type Kenyon cell-specific protein 1 (Mblk-1) (Apis mellifera (Honeybee)).